The primary structure comprises 152 residues: Transcription elongation factor Spt5 (152 aa).

The 31-residue stretch at 99-129 folds into the KOW domain; that stretch reads EGDLVEVISGPFRGMQAQVVRVESTKNEVVL.

It belongs to the archaeal Spt5 family. In terms of assembly, heterodimer composed of Spt4 and Spt5. Interacts with RNA polymerase (RNAP).

In terms of biological role, stimulates transcription elongation. This is Transcription elongation factor Spt5 from Sulfolobus acidocaldarius (strain ATCC 33909 / DSM 639 / JCM 8929 / NBRC 15157 / NCIMB 11770).